Here is a 589-residue protein sequence, read N- to C-terminus: Threonine--tRNA ligase (589 aa).

The catalytic stretch occupies residues 191–487 (DHRKIGKNLG…LLEQTKGNFP (297 aa)). 3 residues coordinate Zn(2+): C284, H335, and H464.

Belongs to the class-II aminoacyl-tRNA synthetase family. In terms of assembly, homodimer. Zn(2+) serves as cofactor.

It localises to the cytoplasm. The enzyme catalyses tRNA(Thr) + L-threonine + ATP = L-threonyl-tRNA(Thr) + AMP + diphosphate + H(+). In terms of biological role, catalyzes the attachment of threonine to tRNA(Thr) in a two-step reaction: L-threonine is first activated by ATP to form Thr-AMP and then transferred to the acceptor end of tRNA(Thr). Also edits incorrectly charged L-seryl-tRNA(Thr). The sequence is that of Threonine--tRNA ligase from Mycoplasmopsis pulmonis (strain UAB CTIP) (Mycoplasma pulmonis).